Here is a 224-residue protein sequence, read N- to C-terminus: Testis-expressed protein 30 (224 aa).

In Bos taurus (Bovine), this protein is Testis-expressed protein 30 (TEX30).